Consider the following 251-residue polypeptide: Triosephosphate isomerase (251 aa).

Residue 9 to 11 (NWK) coordinates substrate. H95 functions as the Electrophile in the catalytic mechanism. The Proton acceptor role is filled by E167. Residues G173, S213, and 234 to 235 (GG) contribute to the substrate site.

Belongs to the triosephosphate isomerase family. As to quaternary structure, homodimer.

It localises to the cytoplasm. The catalysed reaction is D-glyceraldehyde 3-phosphate = dihydroxyacetone phosphate. It participates in carbohydrate biosynthesis; gluconeogenesis. The protein operates within carbohydrate degradation; glycolysis; D-glyceraldehyde 3-phosphate from glycerone phosphate: step 1/1. Its function is as follows. Involved in the gluconeogenesis. Catalyzes stereospecifically the conversion of dihydroxyacetone phosphate (DHAP) to D-glyceraldehyde-3-phosphate (G3P). The polypeptide is Triosephosphate isomerase (Enterococcus faecalis (strain ATCC 700802 / V583)).